The chain runs to 2162 residues: Calpain-type cysteine protease ADL1 (2162 aa).

The first 33 residues, 1–33 (MEEEEHRGVVLVCSICGFLFAVLGPLSFWILWA), serve as a signal peptide directing secretion. At 34–70 (VNWRPWRLYSWIYARKWPAYVQGPQLSTLCSFFTLFA) the chain is on the extracellular side. The helical transmembrane segment at 71–91 (WLVVVSPITVLLVWGGILIAL) threads the bilayer. Residues 92-95 (LERN) lie on the Cytoplasmic side of the membrane. The chain crosses the membrane as a helical span at residues 96–116 (IIGLAVIMVGVALLLSFYSIM). At 117–127 (LWWRTQWQSSK) the chain is on the extracellular side. A helical transmembrane segment spans residues 128–148 (AVAYLLLLAVGLLCAYEFCAV). At 149–164 (YVTTGASASELNSPSG) the chain is on the cytoplasmic side. The chain crosses the membrane as a helical span at residues 165 to 185 (FFFGVSAISLAINMLFISKIL). The Extracellular portion of the chain corresponds to 186-236 (FNGSGFDVDEYVRRLYKFAYSDCVEVAPVSCSPDPPDPSELYMTKSSRVLH). The helical transmembrane segment at 237 to 257 (LGLLYLCSLMVLVVYSILYGL) threads the bilayer. The Cytoplasmic segment spans residues 258–264 (TSKEARW). The chain crosses the membrane as a helical span at residues 265–285 (LGALTSVAVVILDWNLGLCSF). Topologically, residues 286–294 (RFELLKSRM) are extracellular. A helical membrane pass occupies residues 295–315 (IALFVAGTSRVFLICFGVHYW). Over 316–320 (YLGHC) the chain is Cytoplasmic. The chain crosses the membrane as a helical span at residues 321–341 (ISYAFVASVLLAAAVSCWLSI). Over 342-626 (SNPSVARIDA…LMFHQVAGSP (285 aa)) the chain is Extracellular. The tract at residues 366-403 (KGQTSSSNSSDGCGSSVKRSSGSVEAGPHGNATDSMYR) is disordered. The span at 370 to 381 (SSSNSSDGCGSS) shows a compositional bias: low complexity. The helical transmembrane segment at 627–647 (IRAFVVFTLIFIIETVTVAVH) threads the bilayer. Residues 648–663 (RPKPIKVINATHEQFE) lie on the Cytoplasmic side of the membrane. Residues 664-684 (FGFSILLLSPVVCSIMAFIWS) traverse the membrane as a helical segment. The Extracellular segment spans residues 685–697 (LCAEEMTMTSKPR). Residues 698–718 (KYGFIAWLLSTCVGLLLSFLS) form a helical membrane-spanning segment. The Cytoplasmic segment spans residues 719-722 (KSSV). A helical membrane pass occupies residues 723-743 (ILGLSLTVPLMVACLSFAIPI). The Extracellular segment spans residues 744 to 773 (WMRNGYRFWIPGGELDSRENIRQAPGKKER). A helical membrane pass occupies residues 774 to 794 (ALFAISITVFTASVIGLGAIV). Residues 795–825 (SAKPLDALGYKGWDADKKSFYSPYATSMYLG) lie on the Cytoplasmic side of the membrane. Residues 826–846 (WALSSTIAVLATGVIPIVAWF) form a helical membrane-spanning segment. At 847–856 (ATYRFSPSSA) the chain is on the extracellular side. Residues 857–877 (ICVGLFATVLVSFCGVSYWGV) traverse the membrane as a helical segment. The Cytoplasmic portion of the chain corresponds to 878 to 890 (VNSRQDGVPLKAD). A helical transmembrane segment spans residues 891–911 (FLAALLPLLCIPAVFSLFTGM). The Extracellular segment spans residues 912–924 (YKWKDDDWKISRG). Residues 925-945 (VYLFVGMGVLLLLGAISAVIV) form a helical membrane-spanning segment. Over 946-949 (TIRP) the chain is Cytoplasmic. The helical transmembrane segment at 950–970 (WTVGVACLLVILFLVFAIGVI) threads the bilayer. At 971-984 (HYWTSNNFYLTRTQ) the chain is on the extracellular side. Residues 985-1005 (MLLVCSLAFLLALAAFLMGLF) traverse the membrane as a helical segment. Topologically, residues 1006 to 1019 (QEKPFVGASIGYFS) are cytoplasmic. Residues 1020 to 1040 (FLFLLTGRALTVLLSPPIVVY) traverse the membrane as a helical segment. At 1041–1063 (SPRVLPVYVYDAHADSAKNVSYA) the chain is on the extracellular side. The helical transmembrane segment at 1064–1084 (FLILYGIALATEVWGVIASLI) threads the bilayer. The Cytoplasmic portion of the chain corresponds to 1085 to 2162 (LNPPFIGAAI…TKAPIKLEAV (1078 aa)). A phosphoserine mark is found at Ser-1372 and Ser-1377. The 194-residue stretch at 1418-1611 (TGRHCGEIDL…ICSAEYGLFD (194 aa)) folds into the Calpain catalytic 1 domain. At Ser-1668 the chain carries Phosphoserine. The 303-residue stretch at 1706 to 2008 (NFTDQEFPPD…FRSIYVCRVY (303 aa)) folds into the Calpain catalytic 2 domain. Catalysis depends on residues Cys-1772, His-1930, and Asn-1950.

It belongs to the peptidase C2 family. Post-translationally, autocatalytic proteolytic cleavage leading to the production of mainly cytoplasmic localized subproducts of about 85 and 120 kDa. As to expression, ubiquitously expressed with higher levels in embryos, vasculatures, leaf primordia, leaf margins, and shoot apical meristem (SAM).

It localises to the endoplasmic reticulum membrane. It is found in the cytoplasm. The protein localises to the cell membrane. Its subcellular location is the endosome membrane. Its function is as follows. Essential protease involved in epiderm development. Required for aleurone cell development in the endosperm probably by maintaining and restricting the aleurone and embryonic epidermal L1 cell-layer fates as well as meristems organization. Involved in the maintenance of adaxial/abaxial axis information in developing leaves, probably by regulating cell proliferation and expansion. Does not need calcium ions to be active. This is Calpain-type cysteine protease ADL1 (ADL1) from Oryza sativa subsp. japonica (Rice).